Here is a 291-residue protein sequence, read N- to C-terminus: ATP synthase gamma chain (291 aa).

It belongs to the ATPase gamma chain family. In terms of assembly, F-type ATPases have 2 components, CF(1) - the catalytic core - and CF(0) - the membrane proton channel. CF(1) has five subunits: alpha(3), beta(3), gamma(1), delta(1), epsilon(1). CF(0) has three main subunits: a, b and c.

The protein resides in the cell inner membrane. Functionally, produces ATP from ADP in the presence of a proton gradient across the membrane. The gamma chain is believed to be important in regulating ATPase activity and the flow of protons through the CF(0) complex. The polypeptide is ATP synthase gamma chain (Cupriavidus necator (strain ATCC 17699 / DSM 428 / KCTC 22496 / NCIMB 10442 / H16 / Stanier 337) (Ralstonia eutropha)).